The primary structure comprises 288 residues: Probable ketoamine kinase SAOUHSC_02908 (288 aa).

Residue 86-88 coordinates ATP; that stretch reads TYL. Aspartate 191 serves as the catalytic Proton acceptor.

It belongs to the fructosamine kinase family.

It carries out the reaction N(6)-(D-ribulosyl)-L-lysine + ATP = N(6)-(3-O-phospho-D-ribulosyl)-L-lysine + ADP + H(+). It catalyses the reaction N(6)-(D-erythrulosyl)-L-lysine + ATP = N(6)-(3-O-phospho-D-erythrulosyl)-L-lysine + ADP + H(+). The enzyme catalyses N(6)-D-ribulosyl-L-lysyl-[protein] + ATP = N(6)-(3-O-phospho-D-ribulosyl)-L-lysyl-[protein] + ADP + H(+). The catalysed reaction is N(6)-(D-erythrulosyl)-L-lysyl-[protein] + ATP = N(6)-(3-O-phospho-D-erythrulosyl)-L-lysyl-[protein] + ADP + H(+). In terms of biological role, ketoamine kinase that phosphorylates ketoamines, such as erythruloselysine and ribuloselysine, on the third carbon of the sugar moiety to generate ketoamine 3-phosphate. Has higher activity on free lysine (erythruloselysine and ribuloselysine), than on ribuloselysine and erythruloselysine residues on glycated proteins. The protein is Probable ketoamine kinase SAOUHSC_02908 of Staphylococcus aureus (strain NCTC 8325 / PS 47).